The primary structure comprises 239 residues: Purine nucleoside phosphorylase DeoD-type (239 aa).

His5 lines the a purine D-ribonucleoside pocket. Positions 21 and 25 each coordinate phosphate. Lys27 bears the N6-acetyllysine mark. Residues Arg44 and 88 to 91 (RVGS) each bind phosphate. A purine D-ribonucleoside contacts are provided by residues 180 to 182 (EME) and 204 to 205 (SD). Asp205 functions as the Proton donor in the catalytic mechanism.

It belongs to the PNP/UDP phosphorylase family. In terms of assembly, homohexamer; trimer of homodimers.

It carries out the reaction a purine D-ribonucleoside + phosphate = a purine nucleobase + alpha-D-ribose 1-phosphate. The enzyme catalyses a purine 2'-deoxy-D-ribonucleoside + phosphate = a purine nucleobase + 2-deoxy-alpha-D-ribose 1-phosphate. Its function is as follows. Catalyzes the reversible phosphorolytic breakdown of the N-glycosidic bond in the beta-(deoxy)ribonucleoside molecules, with the formation of the corresponding free purine bases and pentose-1-phosphate. This is Purine nucleoside phosphorylase DeoD-type from Escherichia coli O8 (strain IAI1).